The primary structure comprises 114 residues: Small ribosomal subunit protein bS6 (114 aa).

This sequence belongs to the bacterial ribosomal protein bS6 family.

Its function is as follows. Binds together with bS18 to 16S ribosomal RNA. The sequence is that of Small ribosomal subunit protein bS6 from Phocaeicola vulgatus (strain ATCC 8482 / DSM 1447 / JCM 5826 / CCUG 4940 / NBRC 14291 / NCTC 11154) (Bacteroides vulgatus).